Here is a 325-residue protein sequence, read N- to C-terminus: Phosphatidylglycerol--prolipoprotein diacylglyceryl transferase (325 aa).

A run of 4 helical transmembrane segments spans residues 19 to 39, 47 to 67, 93 to 113, and 119 to 139; these read IPLR…VWFG, GGKA…GLVG, IWEG…GAWI, and GIPL…AQAI. An a 1,2-diacyl-sn-glycero-3-phospho-(1'-sn-glycerol)-binding site is contributed by R141. Transmembrane regions (helical) follow at residues 175–195, 207–225, and 237–257; these read HPTF…VIWA, FALY…EYMR, and LNVW…VISA. Residues 266–312 show a composition bias toward basic and acidic residues; it reads IVEPDRDATPAEKDGSGEDGSGEKGVAKADAAAKDPLTKDEPGKDAT. Residues 266 to 325 are disordered; the sequence is IVEPDRDATPAEKDGSGEDGSGEKGVAKADAAAKDPLTKDEPGKDATAENAGAAGAAEKA. Residues 313-325 are compositionally biased toward low complexity; sequence AENAGAAGAAEKA.

The protein belongs to the Lgt family.

It localises to the cell membrane. It carries out the reaction L-cysteinyl-[prolipoprotein] + a 1,2-diacyl-sn-glycero-3-phospho-(1'-sn-glycerol) = an S-1,2-diacyl-sn-glyceryl-L-cysteinyl-[prolipoprotein] + sn-glycerol 1-phosphate + H(+). The protein operates within protein modification; lipoprotein biosynthesis (diacylglyceryl transfer). Its function is as follows. Catalyzes the transfer of the diacylglyceryl group from phosphatidylglycerol to the sulfhydryl group of the N-terminal cysteine of a prolipoprotein, the first step in the formation of mature lipoproteins. The chain is Phosphatidylglycerol--prolipoprotein diacylglyceryl transferase from Streptomyces griseus subsp. griseus (strain JCM 4626 / CBS 651.72 / NBRC 13350 / KCC S-0626 / ISP 5235).